The following is a 207-amino-acid chain: 3,4-dihydroxy-2-butanone 4-phosphate synthase (207 aa).

D-ribulose 5-phosphate is bound by residues 28 to 29, Asp-33, 140 to 144, and Glu-164; these read RE and RRGHT. Mg(2+) is bound at residue Glu-29. A Mg(2+)-binding site is contributed by His-143.

Belongs to the DHBP synthase family. As to quaternary structure, homodimer. The cofactor is Mg(2+). Mn(2+) serves as cofactor.

It catalyses the reaction D-ribulose 5-phosphate = (2S)-2-hydroxy-3-oxobutyl phosphate + formate + H(+). The protein operates within cofactor biosynthesis; riboflavin biosynthesis; 2-hydroxy-3-oxobutyl phosphate from D-ribulose 5-phosphate: step 1/1. Catalyzes the conversion of D-ribulose 5-phosphate to formate and 3,4-dihydroxy-2-butanone 4-phosphate. This Oceanobacillus iheyensis (strain DSM 14371 / CIP 107618 / JCM 11309 / KCTC 3954 / HTE831) protein is 3,4-dihydroxy-2-butanone 4-phosphate synthase.